The chain runs to 410 residues: MNIYAVGGAIRDELLGVPVQDRDYVVVGATPEQMVAQGYRPVGKDFPVFLHPQTHEEYALARTERKTAAGYHGFQFFYAPDVTLEEDLARRDLTINAMAREVRPDGELTGPVIDPFNGQGDVQARVFRHVSDAFLEDPVRILRIARFAARFVDFTVAPETLALMRKMVADGEVDALVAERVWQEVSRGLMEKKPSRMFEVLRECGALARILPEIDALFGVLQRADYHPEVDTGVHVMMVVDHAAQQGYALQVRFAALAHDLGKATTPEDMLPRHIGHEGRSVDLLKPLCERLRVPNDCRDLAVLVAREHGNIHRVMEMGAAALVRLLERSDAIRKPARFAEALQACEADARGRLGFERREYPQAERLRVALVAARGVDAGAVAKRLADAPAGIKDALHQERVRAVELAIS.

ATP-binding residues include glycine 8 and arginine 11. Positions 8 and 11 each coordinate CTP. Positions 21 and 23 each coordinate Mg(2+). Positions 91, 143, and 146 each coordinate ATP. Positions 91, 143, and 146 each coordinate CTP. The HD domain maps to threonine 232 to isoleucine 333.

Belongs to the tRNA nucleotidyltransferase/poly(A) polymerase family. Bacterial CCA-adding enzyme type 1 subfamily. Monomer. Can also form homodimers and oligomers. The cofactor is Mg(2+). Ni(2+) is required as a cofactor.

It carries out the reaction a tRNA precursor + 2 CTP + ATP = a tRNA with a 3' CCA end + 3 diphosphate. It catalyses the reaction a tRNA with a 3' CCA end + 2 CTP + ATP = a tRNA with a 3' CCACCA end + 3 diphosphate. Its function is as follows. Catalyzes the addition and repair of the essential 3'-terminal CCA sequence in tRNAs without using a nucleic acid template. Adds these three nucleotides in the order of C, C, and A to the tRNA nucleotide-73, using CTP and ATP as substrates and producing inorganic pyrophosphate. tRNA 3'-terminal CCA addition is required both for tRNA processing and repair. Also involved in tRNA surveillance by mediating tandem CCA addition to generate a CCACCA at the 3' terminus of unstable tRNAs. While stable tRNAs receive only 3'-terminal CCA, unstable tRNAs are marked with CCACCA and rapidly degraded. The sequence is that of Multifunctional CCA protein from Paraburkholderia phytofirmans (strain DSM 17436 / LMG 22146 / PsJN) (Burkholderia phytofirmans).